A 259-amino-acid polypeptide reads, in one-letter code: Imidazole glycerol phosphate synthase subunit HisF (259 aa).

Catalysis depends on residues D11 and D130.

Belongs to the HisA/HisF family. Heterodimer of HisH and HisF.

It localises to the cytoplasm. The catalysed reaction is 5-[(5-phospho-1-deoxy-D-ribulos-1-ylimino)methylamino]-1-(5-phospho-beta-D-ribosyl)imidazole-4-carboxamide + L-glutamine = D-erythro-1-(imidazol-4-yl)glycerol 3-phosphate + 5-amino-1-(5-phospho-beta-D-ribosyl)imidazole-4-carboxamide + L-glutamate + H(+). Its pathway is amino-acid biosynthesis; L-histidine biosynthesis; L-histidine from 5-phospho-alpha-D-ribose 1-diphosphate: step 5/9. Functionally, IGPS catalyzes the conversion of PRFAR and glutamine to IGP, AICAR and glutamate. The HisF subunit catalyzes the cyclization activity that produces IGP and AICAR from PRFAR using the ammonia provided by the HisH subunit. This Desulforapulum autotrophicum (strain ATCC 43914 / DSM 3382 / VKM B-1955 / HRM2) (Desulfobacterium autotrophicum) protein is Imidazole glycerol phosphate synthase subunit HisF.